Consider the following 509-residue polypeptide: ATP synthase subunit alpha (509 aa).

Residue 169–176 participates in ATP binding; sequence GDRQTGKT.

It belongs to the ATPase alpha/beta chains family. In terms of assembly, F-type ATPases have 2 components, CF(1) - the catalytic core - and CF(0) - the membrane proton channel. CF(1) has five subunits: alpha(3), beta(3), gamma(1), delta(1), epsilon(1). CF(0) has three main subunits: a(1), b(2) and c(9-12). The alpha and beta chains form an alternating ring which encloses part of the gamma chain. CF(1) is attached to CF(0) by a central stalk formed by the gamma and epsilon chains, while a peripheral stalk is formed by the delta and b chains.

Its subcellular location is the cell inner membrane. It carries out the reaction ATP + H2O + 4 H(+)(in) = ADP + phosphate + 5 H(+)(out). Its function is as follows. Produces ATP from ADP in the presence of a proton gradient across the membrane. The alpha chain is a regulatory subunit. In Methylobacterium sp. (strain 4-46), this protein is ATP synthase subunit alpha.